Consider the following 497-residue polypeptide: MRFTQIVAAALCLGATEAAVAPIDRARKVLGNQHAFDKRDASGDTAKAPKHLTSKNKKFYVDPNSIPGVPFDIGESYAGNLANTPAGNSSLFFWYFPSENPEAKNEITIWLNGGPGCSSMIGLLQENGPFLWQPGTDGPVKNPYAWSKLTNMVWVDQPAGTGFSPGPPTVKDEIDVANQFSDFWKNFMDTFDLHHSDVYLAGESYAGQYIPYIASGMLDRKDSEYFNVQGITIIDPSIGATEVIIDAPSVPALHRFNNIIDLNETFVNDITKKWESCGYKKFMDDALKFPPAGPMTVPGKSAGCDVWDEIIAAVKEVNPCFNIYHLRDNCPSPSNVMNGPKNFFNNKQIQEAIHAHPTDYRLCGESQIFGPHRNDRSVPSSYGPLASVIERTNNTIIAHGDLDFLLFTEGSLASIQNMTWGGLQGFQKEPSDKFYVPYKDGSEVGGAGFVGKTHRERGLTWVTVDLAGHEIPQYAPTAAYRMLEYMLGRVQSLTETH.

An N-terminal signal peptide occupies residues 1–18 (MRFTQIVAAALCLGATEA). Asn88 carries N-linked (GlcNAc...) asparagine glycosylation. Ser204 is an active-site residue. Residues Asn263 and Asn393 are each glycosylated (N-linked (GlcNAc...) asparagine). The active site involves Asp403. A glycan (N-linked (GlcNAc...) asparagine) is linked at Asn417. The active site involves His469.

This sequence belongs to the peptidase S10 family.

The protein resides in the secreted. The catalysed reaction is Release of a C-terminal amino acid with broad specificity.. Its function is as follows. Involved in degradation of small peptides. The sequence is that of Carboxypeptidase Y homolog ARB_02032 from Arthroderma benhamiae (strain ATCC MYA-4681 / CBS 112371) (Trichophyton mentagrophytes).